A 241-amino-acid polypeptide reads, in one-letter code: Large ribosomal subunit protein uL3 (241 aa).

Disordered regions lie at residues 140-162 (SHRS…NKKM) and 217-241 (PLPG…EETA). At glutamine 151 the chain carries N5-methylglutamine. Residues 229–241 (APATEAPAAEETA) show a composition bias toward low complexity.

The protein belongs to the universal ribosomal protein uL3 family. Part of the 50S ribosomal subunit. Forms a cluster with proteins L14 and L19. Post-translationally, methylated by PrmB.

In terms of biological role, one of the primary rRNA binding proteins, it binds directly near the 3'-end of the 23S rRNA, where it nucleates assembly of the 50S subunit. The sequence is that of Large ribosomal subunit protein uL3 from Methylobacterium radiotolerans (strain ATCC 27329 / DSM 1819 / JCM 2831 / NBRC 15690 / NCIMB 10815 / 0-1).